A 158-amino-acid chain; its full sequence is Transcriptional repressor NrdR (158 aa).

Residues 3–34 (CPFCNSEETRVIDTRLTDDGHVVRRRRECEHC) fold into a zinc finger. One can recognise an ATP-cone domain in the interval 49–139 (IFVVKKGGQR…VYKEFRDLDH (91 aa)).

Belongs to the NrdR family. The cofactor is Zn(2+).

Its function is as follows. Negatively regulates transcription of bacterial ribonucleotide reductase nrd genes and operons by binding to NrdR-boxes. The chain is Transcriptional repressor NrdR from Kosmotoga olearia (strain ATCC BAA-1733 / DSM 21960 / TBF 19.5.1).